Reading from the N-terminus, the 401-residue chain is Probable tRNA sulfurtransferase (401 aa).

In terms of domain architecture, THUMP spans 60–165 (EPIIDKLKTV…QDGTYVTCHD (106 aa)). Residues 183-184 (ML), 208-209 (HF), Arg-265, Gly-287, and Gln-296 each bind ATP.

Belongs to the ThiI family.

It localises to the cytoplasm. It catalyses the reaction [ThiI sulfur-carrier protein]-S-sulfanyl-L-cysteine + a uridine in tRNA + 2 reduced [2Fe-2S]-[ferredoxin] + ATP + H(+) = [ThiI sulfur-carrier protein]-L-cysteine + a 4-thiouridine in tRNA + 2 oxidized [2Fe-2S]-[ferredoxin] + AMP + diphosphate. It carries out the reaction [ThiS sulfur-carrier protein]-C-terminal Gly-Gly-AMP + S-sulfanyl-L-cysteinyl-[cysteine desulfurase] + AH2 = [ThiS sulfur-carrier protein]-C-terminal-Gly-aminoethanethioate + L-cysteinyl-[cysteine desulfurase] + A + AMP + 2 H(+). It functions in the pathway cofactor biosynthesis; thiamine diphosphate biosynthesis. Catalyzes the ATP-dependent transfer of a sulfur to tRNA to produce 4-thiouridine in position 8 of tRNAs, which functions as a near-UV photosensor. Also catalyzes the transfer of sulfur to the sulfur carrier protein ThiS, forming ThiS-thiocarboxylate. This is a step in the synthesis of thiazole, in the thiamine biosynthesis pathway. The sulfur is donated as persulfide by IscS. The polypeptide is Probable tRNA sulfurtransferase (Geobacillus thermodenitrificans (strain NG80-2)).